The chain runs to 395 residues: Crh-like protein 5 (395 aa).

The N-terminal stretch at 1–19 (MYFKYTAAALAAVLPLCSA) is a signal peptide. An intrachain disulfide couples Cys25 to Cys32. A GH16 domain is found at 45 to 230 (ADFTSASALD…WAGGLTDYSA (186 aa)). Glu119 acts as the Nucleophile in catalysis. Glu123 acts as the Proton donor in catalysis. Positions 123, 203, 207, and 218 each coordinate chitin. A disordered region spans residues 271-374 (ISSSSSVTSS…PELSQGAAGS (104 aa)). Low complexity-rich tracts occupy residues 272–338 (SSSS…SNTG) and 348–364 (GSSS…ASAT). N-linked (GlcNAc...) asparagine glycosylation occurs at Asn319. The GPI-like-anchor amidated glycine moiety is linked to residue Gly370. Residues 371-395 (AAGSIKGSVTACALVFGAVAAVLAF) constitute a propeptide, removed in mature form.

Belongs to the glycosyl hydrolase 16 family. CRH1 subfamily. The GPI-like anchor contains a phosphoceramide lipid group. The anchor position has not been determined.

The protein resides in the cell membrane. Its subcellular location is the secreted. It localises to the cell wall. The catalysed reaction is Random endo-hydrolysis of N-acetyl-beta-D-glucosaminide (1-&gt;4)-beta-linkages in chitin and chitodextrins.. Dual chitinase/transglycosylase that plays a role in cell wall architecture. Chitinase and transglycosylase activities are coupled. Required for the polysaccharide cross-linking at the septa and the cell wall. More specifically, transfers chitin to 1,6-beta-glucan in the cell wall. Chr5 shows acceptor substrate promiscuity and is also able to cross-link chitin to chitin. The polypeptide is Crh-like protein 5 (Aspergillus fumigatus (strain ATCC MYA-4609 / CBS 101355 / FGSC A1100 / Af293) (Neosartorya fumigata)).